Reading from the N-terminus, the 919-residue chain is Isoleucine--tRNA ligase (919 aa).

Residues 57-67 carry the 'HIGH' region motif; that stretch reads PYANGHIHIGT. Glutamate 553 lines the L-isoleucyl-5'-AMP pocket. A 'KMSKS' region motif is present at residues 594-598; it reads KMSKS. Position 597 (lysine 597) interacts with ATP. Zn(2+)-binding residues include cysteine 887, cysteine 890, cysteine 907, and cysteine 910.

This sequence belongs to the class-I aminoacyl-tRNA synthetase family. IleS type 1 subfamily. Monomer. It depends on Zn(2+) as a cofactor.

It localises to the cytoplasm. It catalyses the reaction tRNA(Ile) + L-isoleucine + ATP = L-isoleucyl-tRNA(Ile) + AMP + diphosphate. Functionally, catalyzes the attachment of isoleucine to tRNA(Ile). As IleRS can inadvertently accommodate and process structurally similar amino acids such as valine, to avoid such errors it has two additional distinct tRNA(Ile)-dependent editing activities. One activity is designated as 'pretransfer' editing and involves the hydrolysis of activated Val-AMP. The other activity is designated 'posttransfer' editing and involves deacylation of mischarged Val-tRNA(Ile). This chain is Isoleucine--tRNA ligase, found in Thermotoga petrophila (strain ATCC BAA-488 / DSM 13995 / JCM 10881 / RKU-1).